Reading from the N-terminus, the 70-residue chain is Cold shock-like protein CspI (70 aa).

A CSD domain is found at 7–67; the sequence is GLVKWFNPEK…GPKGPAAVHV (61 aa).

It is found in the cytoplasm. The chain is Cold shock-like protein CspI (cspI) from Escherichia coli O6:H1 (strain CFT073 / ATCC 700928 / UPEC).